The sequence spans 330 residues: MRSHTGLRALVAPGYPLLLLCLLAATRPDPAEGDPTDPTFTSLPVREEMMAKYSNLSLKSCNISVTEKSNVSVEENVILEKPSHVELKCVYTATKDLNLMNVTWKKDDEPLETTGDFNTTKMGNTLTSQYRFIVFNSKQLGKYSCVFGEKELRGTFNIHVPKAHGKKKSLIAYVGDSTVLKCVCQDCLPLNWTWYMGNETAQVPIDAHSNEKYIINGSHANETRLKIKHLLEEDGGSYWCRATFQLGESEEQNELVVLSFLVPLKPFLAILAEVILLVAIILLCEVYTHKKKNDPDAGKEFEQIEQLKSDDSNGIENNVPRYRKTDSADQ.

The signal sequence occupies residues 1-33 (MRSHTGLRALVAPGYPLLLLCLLAATRPDPAEG). Over 34–254 (DPTDPTFTSL…QLGESEEQNE (221 aa)) the chain is Extracellular. Ig-like V-type domains follow at residues 38-161 (PTFT…IHVP) and 162-256 (KAHG…NELV). N-linked (GlcNAc...) asparagine glycosylation is found at Asn-55, Asn-62, Asn-70, Asn-101, Asn-118, Asn-191, Asn-198, Asn-216, and Asn-221. 2 cysteine pairs are disulfide-bonded: Cys-89–Cys-145 and Cys-182–Cys-240. Residues 255–283 (LVVLSFLVPLKPFLAILAEVILLVAIILL) form a helical membrane-spanning segment. Over 284 to 330 (CEVYTHKKKNDPDAGKEFEQIEQLKSDDSNGIENNVPRYRKTDSADQ) the chain is Cytoplasmic. A compositionally biased stretch (basic and acidic residues) spans 293–311 (NDPDAGKEFEQIEQLKSDD). The segment at 293 to 330 (NDPDAGKEFEQIEQLKSDDSNGIENNVPRYRKTDSADQ) is disordered. The residue at position 312 (Ser-312) is a Phosphoserine.

Interacts with SLC16A1, SLC16A6 and SLC16A7. As to expression, only member of the immunoglobulin superfamily to be expressed in embryonal carcinoma cells, which resemble multipotential cells of early embryos.

It is found in the cell membrane. Its subcellular location is the synapse. Its function is as follows. Plays a role in targeting the monocarboxylate transporters SLC16A1, SLC16A6 and SLC16A7 to the cell membrane. Plays a role in the outgrowth of motoneurons and in the formation of neuromuscular junctions. Following muscle denervation, promotes nerve terminal sprouting and the formation of additional acetylcholine receptor clusters at synaptic sites without affecting terminal Schwann cell number or morphology. Delays the retraction of terminal sprouts following re-innervation of denervated endplates. The sequence is that of Embigin (Emb) from Mus musculus (Mouse).